A 102-amino-acid chain; its full sequence is uncharacterized protein (102 aa).

This is an uncharacterized protein from Escherichia coli (strain K12).